A 308-amino-acid polypeptide reads, in one-letter code: MICMHFSVLLQESIADLNINPEGIYIDATFGRGGHSKAILDKLTSGRLIAFDKDLDAIDYATHNFQNDNFEMVHASFTYIYDYCLQHNLLGRVDGIIMDLGVSSPQLDNANRGFSFTHDGPLDMRMDISKGLTASQALEELSVDELTYIFKVYGEERFAKKIALRIKGYIAENGSITTTHQLAELIRATIGKREKKNPATRCFQALRIYVNDELKDLEILLESILDVIKKGGRVAAISFHSLEDRIVKQKFTSLINPKQETNRIAKMLPQDNSQVKMKWITKKAKANQDELSQNVRSRSAILRVVEKL.

Residues 33–35 (GGH), Asp-52, Tyr-81, Asp-99, and Gln-106 contribute to the S-adenosyl-L-methionine site.

The protein belongs to the methyltransferase superfamily. RsmH family.

It localises to the cytoplasm. It catalyses the reaction cytidine(1402) in 16S rRNA + S-adenosyl-L-methionine = N(4)-methylcytidine(1402) in 16S rRNA + S-adenosyl-L-homocysteine + H(+). In terms of biological role, specifically methylates the N4 position of cytidine in position 1402 (C1402) of 16S rRNA. The protein is Ribosomal RNA small subunit methyltransferase H of Francisella philomiragia subsp. philomiragia (strain ATCC 25017 / CCUG 19701 / FSC 153 / O#319-036).